We begin with the raw amino-acid sequence, 562 residues long: NAD-dependent malic enzyme (562 aa).

Tyrosine 101 (proton donor) is an active-site residue. Arginine 154 contributes to the NAD(+) binding site. Lysine 172 serves as the catalytic Proton acceptor. A divalent metal cation is bound by residues glutamate 243, aspartate 244, and aspartate 267. NAD(+) contacts are provided by aspartate 267 and asparagine 415.

It belongs to the malic enzymes family. As to quaternary structure, homotetramer. The cofactor is Mg(2+). Requires Mn(2+) as cofactor.

The enzyme catalyses (S)-malate + NAD(+) = pyruvate + CO2 + NADH. It catalyses the reaction oxaloacetate + H(+) = pyruvate + CO2. This Aliivibrio fischeri (strain MJ11) (Vibrio fischeri) protein is NAD-dependent malic enzyme.